The following is a 272-amino-acid chain: ATP synthase subunit delta (272 aa).

It belongs to the ATPase delta chain family. F-type ATPases have 2 components, F(1) - the catalytic core - and F(0) - the membrane proton channel. F(1) has five subunits: alpha(3), beta(3), gamma(1), delta(1), epsilon(1). F(0) has three main subunits: a(1), b(2) and c(10-14). The alpha and beta chains form an alternating ring which encloses part of the gamma chain. F(1) is attached to F(0) by a central stalk formed by the gamma and epsilon chains, while a peripheral stalk is formed by the delta and b chains.

Its subcellular location is the cell membrane. Its function is as follows. F(1)F(0) ATP synthase produces ATP from ADP in the presence of a proton or sodium gradient. F-type ATPases consist of two structural domains, F(1) containing the extramembraneous catalytic core and F(0) containing the membrane proton channel, linked together by a central stalk and a peripheral stalk. During catalysis, ATP synthesis in the catalytic domain of F(1) is coupled via a rotary mechanism of the central stalk subunits to proton translocation. In terms of biological role, this protein is part of the stalk that links CF(0) to CF(1). It either transmits conformational changes from CF(0) to CF(1) or is implicated in proton conduction. The chain is ATP synthase subunit delta from Corynebacterium urealyticum (strain ATCC 43042 / DSM 7109).